The following is a 333-amino-acid chain: Ribosomal RNA small subunit methyltransferase C (333 aa).

The protein belongs to the methyltransferase superfamily. RsmC family. Monomer.

Its subcellular location is the cytoplasm. The enzyme catalyses guanosine(1207) in 16S rRNA + S-adenosyl-L-methionine = N(2)-methylguanosine(1207) in 16S rRNA + S-adenosyl-L-homocysteine + H(+). Its function is as follows. Specifically methylates the guanine in position 1207 of 16S rRNA in the 30S particle. This Mannheimia succiniciproducens (strain KCTC 0769BP / MBEL55E) protein is Ribosomal RNA small subunit methyltransferase C.